Reading from the N-terminus, the 219-residue chain is Oxaloacetate tautomerase YcgM (219 aa).

Positions 70, 72, and 101 each coordinate Mg(2+).

It belongs to the FAH family. It depends on a divalent metal cation as a cofactor.

It catalyses the reaction oxaloacetate = enol-oxaloacetate. Tautomerase that converts enol-oxaloacetate to the keto form of oxaloacetate. This is Oxaloacetate tautomerase YcgM from Escherichia coli (strain K12).